A 144-amino-acid chain; its full sequence is Large ribosomal subunit protein uL16 (144 aa).

It belongs to the universal ribosomal protein uL16 family. In terms of assembly, part of the 50S ribosomal subunit.

Functionally, binds 23S rRNA and is also seen to make contacts with the A and possibly P site tRNAs. The protein is Large ribosomal subunit protein uL16 of Heliobacterium modesticaldum (strain ATCC 51547 / Ice1).